A 175-amino-acid chain; its full sequence is Sec-independent protein translocase protein TatB (175 aa).

A helical membrane pass occupies residues 1–21 (MLDLGLTKMALIGVVALVVLG). Disordered stretches follow at residues 104 to 132 (GGALEDVGNAGNTSWPGSTPAAGAKRKNW) and 155 to 175 (SGAARVARHTPATMRRPTRFF).

Belongs to the TatB family. In terms of assembly, the Tat system comprises two distinct complexes: a TatABC complex, containing multiple copies of TatA, TatB and TatC subunits, and a separate TatA complex, containing only TatA subunits. Substrates initially bind to the TatABC complex, which probably triggers association of the separate TatA complex to form the active translocon.

The protein resides in the cell inner membrane. Its function is as follows. Part of the twin-arginine translocation (Tat) system that transports large folded proteins containing a characteristic twin-arginine motif in their signal peptide across membranes. Together with TatC, TatB is part of a receptor directly interacting with Tat signal peptides. TatB may form an oligomeric binding site that transiently accommodates folded Tat precursor proteins before their translocation. In Paraburkholderia xenovorans (strain LB400), this protein is Sec-independent protein translocase protein TatB.